We begin with the raw amino-acid sequence, 21 residues long: Thioredoxin (21 aa).

N6-acetyllysine is present on Lys-3. An N6-succinyllysine modification is found at Lys-8.

This sequence belongs to the thioredoxin family. In terms of assembly, homodimer; disulfide-linked. Interacts with TXNIP through the redox-active site. Interacts with MAP3K5 and CASP3. Interacts with APEX1; the interaction stimulates the FOS/JUN AP-1 DNA-binding activity in a redox-dependent manner.

The protein resides in the nucleus. The protein localises to the cytoplasm. Its subcellular location is the secreted. In terms of biological role, participates in various redox reactions through the reversible oxidation of its active center dithiol to a disulfide and catalyzes dithiol-disulfide exchange reactions. Plays a role in the reversible S-nitrosylation of cysteine residues in target proteins, and thereby contributes to the response to intracellular nitric oxide. Nitrosylates the active site Cys of CASP3 in response to nitric oxide (NO), and thereby inhibits caspase-3 activity. Induces the FOS/JUN AP-1 DNA binding activity in ionizing radiation (IR) cells through its oxidation/reduction status and stimulates AP-1 transcriptional activity. The chain is Thioredoxin (TXN) from Canis lupus familiaris (Dog).